A 296-amino-acid polypeptide reads, in one-letter code: Large ribosomal subunit protein uL15m (296 aa).

The N-terminal 20 residues, 1 to 20 (MSLIKKPGGKTIEVVKNLPR), are a transit peptide targeting the mitochondrion. The segment at 25–59 (NLRPNPGAKTLEKRRGRGMHGGNRSGWGHKGERQR) is disordered.

The protein belongs to the universal ribosomal protein uL15 family. Component of the mitochondrial ribosome large subunit (39S) which comprises a 16S rRNA and about 50 distinct proteins.

The protein resides in the mitochondrion. The protein is Large ribosomal subunit protein uL15m (mrpl15) of Danio rerio (Zebrafish).